The sequence spans 193 residues: Orotate phosphoribosyltransferase (193 aa).

Residues R85, K89, and 111–119 each bind 5-phospho-alpha-D-ribose 1-diphosphate; that span reads DDVLTTGKS. T115 and R143 together coordinate orotate.

This sequence belongs to the purine/pyrimidine phosphoribosyltransferase family. PyrE subfamily. As to quaternary structure, homodimer. Mg(2+) serves as cofactor.

The enzyme catalyses orotidine 5'-phosphate + diphosphate = orotate + 5-phospho-alpha-D-ribose 1-diphosphate. It functions in the pathway pyrimidine metabolism; UMP biosynthesis via de novo pathway; UMP from orotate: step 1/2. In terms of biological role, catalyzes the transfer of a ribosyl phosphate group from 5-phosphoribose 1-diphosphate to orotate, leading to the formation of orotidine monophosphate (OMP). This is Orotate phosphoribosyltransferase from Pyrobaculum aerophilum (strain ATCC 51768 / DSM 7523 / JCM 9630 / CIP 104966 / NBRC 100827 / IM2).